We begin with the raw amino-acid sequence, 248 residues long: Transcription factor bHLH35 (248 aa).

Positions 37–54 are enriched in low complexity; the sequence is SGSYDSSSPDGAASSPAS. The disordered stretch occupies residues 37-60; that stretch reads SGSYDSSSPDGAASSPASKNIVSE. A bHLH domain is found at 51-100; it reads SPASKNIVSERNRRQKLNQRLFALRSVVPNITKMDKASIIKDAISYIEGL.

As to quaternary structure, homodimer. In terms of tissue distribution, expressed constitutively in roots, leaves, stems, and flowers.

It localises to the nucleus. This is Transcription factor bHLH35 (BHLH35) from Arabidopsis thaliana (Mouse-ear cress).